Reading from the N-terminus, the 393-residue chain is Chalcone synthase DIII (393 aa).

Cysteine 164 is an active-site residue.

This sequence belongs to the thiolase-like superfamily. Chalcone/stilbene synthases family.

It carries out the reaction (E)-4-coumaroyl-CoA + 3 malonyl-CoA + 3 H(+) = 2',4,4',6'-tetrahydroxychalcone + 3 CO2 + 4 CoA. The protein operates within secondary metabolite biosynthesis; flavonoid biosynthesis. Its function is as follows. The primary product of this enzyme is 4,2',4',6'-tetrahydroxychalcone (also termed naringenin-chalcone or chalcone) which can under specific conditions spontaneously isomerize into naringenin. This Ipomoea batatas (Sweet potato) protein is Chalcone synthase DIII (CHS-DIII).